Reading from the N-terminus, the 319-residue chain is Acetyl-coenzyme A carboxylase carboxyl transferase subunit alpha (319 aa).

The region spanning 35–296 is the CoA carboxyltransferase C-terminal domain; that stretch reads NIDEEVHRLR…KAQLLADLAD (262 aa).

It belongs to the AccA family. Acetyl-CoA carboxylase is a heterohexamer composed of biotin carboxyl carrier protein (AccB), biotin carboxylase (AccC) and two subunits each of ACCase subunit alpha (AccA) and ACCase subunit beta (AccD).

It is found in the cytoplasm. It catalyses the reaction N(6)-carboxybiotinyl-L-lysyl-[protein] + acetyl-CoA = N(6)-biotinyl-L-lysyl-[protein] + malonyl-CoA. It functions in the pathway lipid metabolism; malonyl-CoA biosynthesis; malonyl-CoA from acetyl-CoA: step 1/1. Component of the acetyl coenzyme A carboxylase (ACC) complex. First, biotin carboxylase catalyzes the carboxylation of biotin on its carrier protein (BCCP) and then the CO(2) group is transferred by the carboxyltransferase to acetyl-CoA to form malonyl-CoA. The chain is Acetyl-coenzyme A carboxylase carboxyl transferase subunit alpha from Shigella sonnei (strain Ss046).